We begin with the raw amino-acid sequence, 416 residues long: CinA-like protein (416 aa).

This sequence belongs to the CinA family.

The chain is CinA-like protein from Thermosynechococcus vestitus (strain NIES-2133 / IAM M-273 / BP-1).